The following is a 334-amino-acid chain: N-acetyl-gamma-glutamyl-phosphate reductase (334 aa).

The active site involves Cys-154.

It belongs to the NAGSA dehydrogenase family. Type 1 subfamily.

Its subcellular location is the cytoplasm. It catalyses the reaction N-acetyl-L-glutamate 5-semialdehyde + phosphate + NADP(+) = N-acetyl-L-glutamyl 5-phosphate + NADPH + H(+). Its pathway is amino-acid biosynthesis; L-arginine biosynthesis; N(2)-acetyl-L-ornithine from L-glutamate: step 3/4. Its function is as follows. Catalyzes the NADPH-dependent reduction of N-acetyl-5-glutamyl phosphate to yield N-acetyl-L-glutamate 5-semialdehyde. The chain is N-acetyl-gamma-glutamyl-phosphate reductase from Buchnera aphidicola subsp. Acyrthosiphon pisum (strain Tuc7).